A 99-amino-acid chain; its full sequence is Protein Frey (99 aa).

The helical transmembrane segment at 10 to 29 (YPRAGLSLFLFYLILAGALL) threads the bilayer. Positions 60–90 (DYGLRPKHPRPGGPRPLLSQAQQRKRDGPNM) are disordered.

As to quaternary structure, interacts with SPPL2C (via active sites); the interaction stabilizes FREY1 protein and inhibits SPPL2C proteolytic activity. Interacts with IZUMO1; the interaction retains IZUMO1 at the endoplasmic reticulum membrane and coordinates IZUMO1 complex assembly. As to expression, expressed in round spermatids (at protein level).

The protein localises to the endoplasmic reticulum membrane. Functionally, key regulator for male fertility expressed transiently in round spermatids where it recruits IZUMO1 at the endoplasmic reticulum (ER) membrane and coordinates the oolemmal binding multimeric complex (IZUMO1 complex) assembly. Upon complete assembly of the IZUMO1 complex, its ER retention is released, facilitating IZUMO1 complex export to the acrosome. Through the interaction with SPPL2C, inhibits its intramembrane protease activity directly accessing the catalytic center of an I-CLiP. The protein is Protein Frey of Mus musculus (Mouse).